Consider the following 499-residue polypeptide: ATP synthase subunit beta, chloroplastic (499 aa).

Residue Gly-170 to Thr-177 coordinates ATP.

Belongs to the ATPase alpha/beta chains family. F-type ATPases have 2 components, CF(1) - the catalytic core - and CF(0) - the membrane proton channel. CF(1) has five subunits: alpha(3), beta(3), gamma(1), delta(1), epsilon(1). CF(0) has four main subunits: a(1), b(1), b'(1) and c(9-12).

It is found in the plastid. It localises to the chloroplast thylakoid membrane. The enzyme catalyses ATP + H2O + 4 H(+)(in) = ADP + phosphate + 5 H(+)(out). Produces ATP from ADP in the presence of a proton gradient across the membrane. The catalytic sites are hosted primarily by the beta subunits. This is ATP synthase subunit beta, chloroplastic from Ipomoea purpurea (Common morning glory).